We begin with the raw amino-acid sequence, 675 residues long: Transmembrane protein 232 (675 aa).

A helical transmembrane segment spans residues 163–183; the sequence is LVKIGYLIFLRLFVFFLHGHL. Residues 598–634 are a coiled coil; sequence WQKDMEARKREEEAYKAQNQKDKEEKEKIHFQEIMKQ. The disordered stretch occupies residues 605–624; the sequence is RKREEEAYKAQNQKDKEEKE.

As to expression, high expression in the testis and weak expression levels in the spleen, liver, brain, uterus, lung, epididymis and kidney. Not detected in the heart or ovary.

The protein resides in the membrane. In terms of biological role, plays a critical role for male fertility and sperm motility by regulating sperm cytoplasm removal and maintaining axoneme integrity. This chain is Transmembrane protein 232 (Tmem232), found in Mus musculus (Mouse).